The primary structure comprises 40 residues: Beta-glucosidase 1 (40 aa).

The enzyme catalyses Hydrolysis of terminal, non-reducing beta-D-glucosyl residues with release of beta-D-glucose.. In Passalora fulva (Tomato leaf mold), this protein is Beta-glucosidase 1.